The sequence spans 644 residues: Heat shock protein SSC3, mitochondrial (644 aa).

The protein belongs to the heat shock protein 70 family.

The protein localises to the mitochondrion matrix. Its subcellular location is the mitochondrion nucleoid. Functionally, plays a role in facilitating the assembly of some protein complexes inside the mitochondria. It may initiate the events that lead to refolding of imported precursors in the matrix space. The polypeptide is Heat shock protein SSC3, mitochondrial (ECM10) (Saccharomyces cerevisiae (strain ATCC 204508 / S288c) (Baker's yeast)).